The primary structure comprises 460 residues: Glucan endo-1,3-beta-D-glucosidase (460 aa).

The signal sequence occupies residues 1 to 26 (MAANVQTSSLLFLVFLLLQNFYSANS). The Proton donor role is filled by Glu123. Catalysis depends on Glu268, which acts as the Nucleophile. The tract at residues 352-371 (NTQNPTTPATPTPTPKAAGS) is disordered. Residue Asn355 is glycosylated (N-linked (GlcNAc...) asparagine). Cysteines 373 and 435 form a disulfide. Asn447 carries N-linked (GlcNAc...) asparagine glycosylation.

Belongs to the glycosyl hydrolase 17 family. In terms of assembly, homodimer. Glycosylated. Post-translationally, contains two additional disulfide bonds, but it is unclear if they are between the pairs Cys-392-Cys-398 and Cys-407-Cys-453 (PudMed:18096638) or between the pairs Cys-392-Cys-453 and Cys-398-Cys-407 (PudMed:12392450). As to expression, expressed only in pollen.

It is found in the secreted. It carries out the reaction Hydrolysis of (1-&gt;3)-beta-D-glucosidic linkages in (1-&gt;3)-beta-D-glucans.. This Olea europaea (Common olive) protein is Glucan endo-1,3-beta-D-glucosidase (OLE9).